Here is a 906-residue protein sequence, read N- to C-terminus: Inter-alpha-trypsin inhibitor heavy chain H1 (906 aa).

The N-terminal stretch at 1 to 22 (MGLRGLLCVCLVSLLALQAVAA) is a signal peptide. Positions 23–29 (QGSPTRN) are excised as a propeptide. One can recognise a VIT domain in the interval 32–161 (GGKKRMAVDA…KATFRLTYEE (130 aa)). S-linked (Hex...) cysteine glycosylation is present at cysteine 55. Serine 124 is modified (phosphoserine). The VWFA domain occupies 287–470 (NVVFVIDISS…QQLQGFYEQV (184 aa)). Residues threonine 397 and threonine 402 each carry the phosphothreonine modification. Asparagine 583 carries N-linked (GlcNAc...) asparagine glycosylation. O-linked (GalNAc...) serine glycosylation occurs at serine 643. Threonine 648 carries an O-linked (GalNAc...) threonine glycan. Residue aspartate 667 is modified to Aspartate 1-(chondroitin 4-sulfate)-ester. The propeptide occupies 668 to 906 (PHFLIHVPQK…HTDYIVPDIF (239 aa)). Residue asparagine 745 is glycosylated (N-linked (GlcNAc...) asparagine).

The protein belongs to the ITIH family. As to quaternary structure, I-alpha-I plasma protease inhibitors are assembled from one or two heavy chains (HC) and one light chain, bikunin. Inter-alpha-inhibitor (I-alpha-I) is composed of ITIH1/HC1, ITIH2/HC2 and bikunin. Interacts with TNFAIP6 (via Link and CUB domains). Heavy chains are linked to bikunin via chondroitin 4-sulfate esterified to the alpha-carboxyl of the C-terminal aspartate after propeptide cleavage. Post-translationally, the S-linked glycan is composed of two 6-carbon sugars, possibly Glc or Gal.

The protein resides in the secreted. Its function is as follows. May act as a carrier of hyaluronan in serum or as a binding protein between hyaluronan and other matrix protein, including those on cell surfaces in tissues to regulate the localization, synthesis and degradation of hyaluronan which are essential to cells undergoing biological processes. This Bos taurus (Bovine) protein is Inter-alpha-trypsin inhibitor heavy chain H1 (ITIH1).